A 340-amino-acid polypeptide reads, in one-letter code: Dof zinc finger protein DOF2.2 (340 aa).

The disordered stretch occupies residues 12–33 (PPINWPQSANPNNHPHHHQLQE). The Dof-type zinc finger occupies 94 to 148 (LKCPRCDSANTKFCYFNNYNLTQPRHFCKACRRYWTRGGALRNVPVGGGCRRNKK). 4 residues coordinate Zn(2+): C96, C99, C121, and C124. Disordered regions lie at residues 138–180 (PVGG…TSNV) and 301–340 (GNIS…QHLM). Over residues 151-165 (SGNSKSSSSSQNKQS) the composition is skewed to low complexity. Polar residues-rich tracts occupy residues 166–180 (TSMV…TSNV) and 309–331 (GLTS…GSSS).

It is found in the nucleus. Transcription factor that binds specifically to a 5'-AA[AG]G-3' consensus core sequence. The chain is Dof zinc finger protein DOF2.2 (DOF2.2) from Arabidopsis thaliana (Mouse-ear cress).